A 684-amino-acid polypeptide reads, in one-letter code: uncharacterized protein (684 aa).

Disordered stretches follow at residues 267–353 and 388–449; these read MGAR…TCTD and SVAS…AERE. The span at 316-326 shows a compositional bias: polar residues; sequence GMTSAKASTSY. The segment covering 438–449 has biased composition (basic and acidic residues); it reads RPTEARRRAERE.

This is an uncharacterized protein from Colorado tick fever virus (strain USA/Florio N-7180) (CTFV).